Here is a 225-residue protein sequence, read N- to C-terminus: Urease accessory protein UreE (225 aa).

The span at 171–215 (HHGHEHSHDHEHGHSHAAHEHSHGHDHTHGHDHDHGDHVHDESCG) shows a compositional bias: basic and acidic residues. The tract at residues 171-225 (HHGHEHSHDHEHGHSHAAHEHSHGHDHTHGHDHDHGDHVHDESCGHGHHHHHAHR) is disordered. Residues 216-225 (HGHHHHHAHR) show a composition bias toward basic residues.

It belongs to the UreE family.

Its subcellular location is the cytoplasm. Its function is as follows. Involved in urease metallocenter assembly. Binds nickel. Probably functions as a nickel donor during metallocenter assembly. The sequence is that of Urease accessory protein UreE from Paraburkholderia xenovorans (strain LB400).